Reading from the N-terminus, the 142-residue chain is Large ribosomal subunit protein uL11 (142 aa).

The protein belongs to the universal ribosomal protein uL11 family. Part of the ribosomal stalk of the 50S ribosomal subunit. Interacts with L10 and the large rRNA to form the base of the stalk. L10 forms an elongated spine to which L12 dimers bind in a sequential fashion forming a multimeric L10(L12)X complex. In terms of processing, one or more lysine residues are methylated.

Forms part of the ribosomal stalk which helps the ribosome interact with GTP-bound translation factors. The polypeptide is Large ribosomal subunit protein uL11 (Haemophilus ducreyi (strain 35000HP / ATCC 700724)).